The sequence spans 129 residues: Putative membrane protein insertion efficiency factor (129 aa).

This sequence belongs to the UPF0161 family.

The protein resides in the cell inner membrane. Could be involved in insertion of integral membrane proteins into the membrane. The protein is Putative membrane protein insertion efficiency factor of Rhodopseudomonas palustris (strain TIE-1).